Reading from the N-terminus, the 1318-residue chain is 1-phosphatidylinositol 4,5-bisphosphate phosphodiesterase classes I and II (1318 aa).

In terms of domain architecture, PI-PLC X-box spans 318 to 466; the sequence is DDMDQPMSHY…LRRKIIIKNK (149 aa). Catalysis depends on residues H333 and H378. Substrate-binding residues include K464 and K466. The span at 466 to 481 shows a compositional bias: basic residues; sequence KKKHHHHHHHHHHKKP. Disordered regions lie at residues 466-489 and 505-594; these read KKKH…TPAA and QQVG…KETE. Low complexity-rich tracts occupy residues 528 to 543 and 554 to 563; these read ATGT…AGHA and KDSTGSSDSD. The span at 571–580 shows a compositional bias: polar residues; that stretch reads LPNTTPNLPS. Basic and acidic residues predominate over residues 585 to 594; it reads PPEKAQKETE. The PI-PLC Y-box domain occupies 599-715; the sequence is ISALVNYVQP…GYLLKPEFMR (117 aa). S628 and R655 together coordinate substrate. The C2 domain maps to 715 to 843; that stretch reads RRSDRRLDPF…NLRSEVGQPI (129 aa). Disordered stretches follow at residues 1080–1112 and 1296–1318; these read LDLG…TQES and GSHS…EMKT. The segment covering 1088–1107 has biased composition (low complexity); it reads ESAAADAGEDLAGGSSSLDG.

As to expression, expressed in neuronal cell bodies of the optic lobe, central brain, and thoracic ganglia in adults, and the brain of larvae.

It carries out the reaction a 1,2-diacyl-sn-glycero-3-phospho-(1D-myo-inositol-4,5-bisphosphate) + H2O = 1D-myo-inositol 1,4,5-trisphosphate + a 1,2-diacyl-sn-glycerol + H(+). The production of the second messenger molecules diacylglycerol (DAG) and inositol 1,4,5-trisphosphate (IP3) is mediated by activated phosphatidylinositol-specific phospholipase C enzymes. This is 1-phosphatidylinositol 4,5-bisphosphate phosphodiesterase classes I and II (Plc21C) from Drosophila melanogaster (Fruit fly).